A 141-amino-acid chain; its full sequence is Nucleoside diphosphate kinase (141 aa).

6 residues coordinate ATP: Lys11, Phe59, Arg87, Thr93, Arg104, and Asn114. His117 (pros-phosphohistidine intermediate) is an active-site residue.

The protein belongs to the NDK family. Homotetramer. Mg(2+) serves as cofactor.

The protein localises to the cytoplasm. It carries out the reaction a 2'-deoxyribonucleoside 5'-diphosphate + ATP = a 2'-deoxyribonucleoside 5'-triphosphate + ADP. The catalysed reaction is a ribonucleoside 5'-diphosphate + ATP = a ribonucleoside 5'-triphosphate + ADP. Major role in the synthesis of nucleoside triphosphates other than ATP. The ATP gamma phosphate is transferred to the NDP beta phosphate via a ping-pong mechanism, using a phosphorylated active-site intermediate. This Photorhabdus laumondii subsp. laumondii (strain DSM 15139 / CIP 105565 / TT01) (Photorhabdus luminescens subsp. laumondii) protein is Nucleoside diphosphate kinase.